A 313-amino-acid polypeptide reads, in one-letter code: Esterase mpl1 (313 aa).

Active-site charge relay system residues include Ser174, Asp259, and His287.

Belongs to the LovG family.

It functions in the pathway mycotoxin biosynthesis. Functionally, esterase; part of the gene cluster that mediates the biosynthesis of the mycotoxin citrinin, a hepato-nephrotoxic compound to humans due to inhibition of respiration complex III. The pathway begins with the synthesis of a keto-aldehyde intermediate by the citrinin PKS (pksCT) from successive condensations of 4 malonyl-CoA units, presumably with a simple acetyl-CoA starter unit. Release of the keto-aldehyde intermediate is consistent with the presence of the C-terminal reductive release domain. Mp11 collaborates with pksCT by catalyzing the hydrolysis of ACP-bound acyl intermediates to free the ACP from stalled intermediates. Mpl2 then catalyzes the oxidation of the C-12 methyl of the ketone intermediate to an alcohol intermediate which is further oxidized by the oxidoreductase mpl7 to produce a bisaldehyde intermediate. The fourth catalytic step is catalyzed by the mpl4 aldehyde dehydrogenase. The final transformation is the reduction of C-3 by mpl6 to provide the chemically stable citrinin nucleus. This is Esterase mpl1 from Monascus purpureus (Red mold).